Here is a 432-residue protein sequence, read N- to C-terminus: Adenylosuccinate synthetase (432 aa).

GTP is bound by residues 13–19 (GDEGKGK) and 41–43 (GHT). Asp14 acts as the Proton acceptor in catalysis. Mg(2+) is bound by residues Asp14 and Gly41. IMP contacts are provided by residues 14-17 (DEGK), 39-42 (NAGH), Thr130, Arg144, Gln225, Thr240, and Arg304. His42 acts as the Proton donor in catalysis. 300-306 (ATTGRKR) is a substrate binding site. GTP is bound by residues Arg306, 332 to 334 (KLD), and 415 to 417 (STG).

It belongs to the adenylosuccinate synthetase family. In terms of assembly, homodimer. Mg(2+) is required as a cofactor.

Its subcellular location is the cytoplasm. The enzyme catalyses IMP + L-aspartate + GTP = N(6)-(1,2-dicarboxyethyl)-AMP + GDP + phosphate + 2 H(+). The protein operates within purine metabolism; AMP biosynthesis via de novo pathway; AMP from IMP: step 1/2. In terms of biological role, plays an important role in the de novo pathway of purine nucleotide biosynthesis. Catalyzes the first committed step in the biosynthesis of AMP from IMP. The chain is Adenylosuccinate synthetase from Pseudoalteromonas atlantica (strain T6c / ATCC BAA-1087).